A 654-amino-acid polypeptide reads, in one-letter code: Acetyl-coenzyme A synthetase (654 aa).

CoA contacts are provided by residues 190-193 (RGGK) and Thr-313. ATP is bound by residues 389–391 (GEP), 413–418 (DTWWQT), Asp-504, and Arg-519. Position 527 (Ser-527) interacts with CoA. Arg-530 contributes to the ATP binding site. Positions 541 and 546 each coordinate Mg(2+). Lys-613 bears the N6-acetyllysine mark.

It belongs to the ATP-dependent AMP-binding enzyme family. The cofactor is Mg(2+). Acetylated. Deacetylation by the SIR2-homolog deacetylase activates the enzyme.

The enzyme catalyses acetate + ATP + CoA = acetyl-CoA + AMP + diphosphate. Its function is as follows. Catalyzes the conversion of acetate into acetyl-CoA (AcCoA), an essential intermediate at the junction of anabolic and catabolic pathways. AcsA undergoes a two-step reaction. In the first half reaction, AcsA combines acetate with ATP to form acetyl-adenylate (AcAMP) intermediate. In the second half reaction, it can then transfer the acetyl group from AcAMP to the sulfhydryl group of CoA, forming the product AcCoA. The protein is Acetyl-coenzyme A synthetase of Leptospira borgpetersenii serovar Hardjo-bovis (strain L550).